The chain runs to 101 residues: Small ribosomal subunit protein bS16 (101 aa).

It belongs to the bacterial ribosomal protein bS16 family.

In Ureaplasma urealyticum serovar 10 (strain ATCC 33699 / Western), this protein is Small ribosomal subunit protein bS16.